We begin with the raw amino-acid sequence, 401 residues long: Protein-glutamate methylesterase/protein-glutamine glutaminase (401 aa).

Residues 16 to 134 (RVLVIDDSAV…LAGAEEFRRD (119 aa)) form the Response regulatory domain. Residue aspartate 67 is modified to 4-aspartylphosphate. The interval 146–208 (PIPPVPTQRD…PQGRGTPRNT (63 aa)) is disordered. 2 stretches are compositionally biased toward low complexity: residues 166 to 176 (AAPGAPVARSI) and 185 to 199 (SAPA…AQPP). Positions 205-400 (PRNTARPEII…PGIVRRAKGG (196 aa)) constitute a CheB-type methylesterase domain. Active-site residues include serine 219, histidine 246, and aspartate 342.

Belongs to the CheB family. Phosphorylated by CheA. Phosphorylation of the N-terminal regulatory domain activates the methylesterase activity.

The protein localises to the cytoplasm. It catalyses the reaction [protein]-L-glutamate 5-O-methyl ester + H2O = L-glutamyl-[protein] + methanol + H(+). The enzyme catalyses L-glutaminyl-[protein] + H2O = L-glutamyl-[protein] + NH4(+). In terms of biological role, involved in chemotaxis. Part of a chemotaxis signal transduction system that modulates chemotaxis in response to various stimuli. Catalyzes the demethylation of specific methylglutamate residues introduced into the chemoreceptors (methyl-accepting chemotaxis proteins or MCP) by CheR. Also mediates the irreversible deamidation of specific glutamine residues to glutamic acid. This Maricaulis maris (strain MCS10) (Caulobacter maris) protein is Protein-glutamate methylesterase/protein-glutamine glutaminase.